A 693-amino-acid chain; its full sequence is Elongation factor G (693 aa).

Residues 8 to 282 (KNTRNIGIMA…AVIDYLPSPL (275 aa)) form the tr-type G domain. Residues 17-24 (AHIDAGKT), 81-85 (DTPGH), and 135-138 (NKMD) each bind GTP.

Belongs to the TRAFAC class translation factor GTPase superfamily. Classic translation factor GTPase family. EF-G/EF-2 subfamily.

The protein resides in the cytoplasm. Catalyzes the GTP-dependent ribosomal translocation step during translation elongation. During this step, the ribosome changes from the pre-translocational (PRE) to the post-translocational (POST) state as the newly formed A-site-bound peptidyl-tRNA and P-site-bound deacylated tRNA move to the P and E sites, respectively. Catalyzes the coordinated movement of the two tRNA molecules, the mRNA and conformational changes in the ribosome. This is Elongation factor G from Staphylococcus intermedius.